A 395-amino-acid chain; its full sequence is ATP phosphoribosyltransferase regulatory subunit (395 aa).

The protein belongs to the class-II aminoacyl-tRNA synthetase family. HisZ subfamily. Heteromultimer composed of HisG and HisZ subunits.

The protein localises to the cytoplasm. The protein operates within amino-acid biosynthesis; L-histidine biosynthesis; L-histidine from 5-phospho-alpha-D-ribose 1-diphosphate: step 1/9. In terms of biological role, required for the first step of histidine biosynthesis. May allow the feedback regulation of ATP phosphoribosyltransferase activity by histidine. This is ATP phosphoribosyltransferase regulatory subunit from Pseudomonas syringae pv. tomato (strain ATCC BAA-871 / DC3000).